We begin with the raw amino-acid sequence, 907 residues long: Envelope glycoprotein B (907 aa).

A signal peptide spans 1–24 (MESRIWCLVVCVNLCIVCLGAAVS). The Virion surface portion of the chain corresponds to 25–751 (SSSTRGTSAT…EGVATFLKNP (727 aa)). The segment at 29-62 (RGTSATHSHHSSHTTSAAHSRSGSVSQRVTSSQT) is disordered. Residues 41–62 (HTTSAAHSRSGSVSQRVTSSQT) are compositionally biased toward low complexity. N-linked (GlcNAc...) asparagine; by host glycosylation is found at Asn-68, Asn-73, and Asn-85. 4 cysteine pairs are disulfide-bonded: Cys-94–Cys-551, Cys-111–Cys-507, Cys-185–Cys-250, and Cys-344–Cys-391. An involved in fusion and/or binding to host membrane region spans residues 152 to 158 (SYAYIHT). Asn-208 carries N-linked (GlcNAc...) asparagine; by host glycosylation. Residues 237 to 244 (GSTWLYRE) form an involved in fusion and/or binding to host membrane region. N-linked (GlcNAc...) asparagine; by host glycosylation is found at Asn-281, Asn-286, Asn-302, Asn-341, Asn-383, Asn-405, Asn-409, Asn-417, Asn-447, Asn-452, Asn-456, Asn-466, Asn-555, and Asn-586. Cys-574 and Cys-611 form a disulfide bridge. A hydrophobic membrane proximal region region spans residues 697–749 (VEDKVVDPLPPYLKGLDDLMSGLGAAGKAVGVAIGAVGGAVASVVEGVATFLK). Residues 752-772 (FGAFTIILVAIAVVIITYLIY) form a helical membrane-spanning segment. Over 773–907 (TRQRRLCTQP…LKDSDEEENV (135 aa)) the chain is Intravirion. Polar residues-rich tracts occupy residues 798–810 (VTSG…SLQA) and 860–877 (RAQQ…GTQD). 2 disordered regions span residues 798–838 (VTSG…TAAP) and 857–907 (AEQR…EENV). Basic and acidic residues predominate over residues 878–887 (KGQKPNLLDR). The short motif at 895 to 898 (YRHL) is the Internalization motif element.

This sequence belongs to the herpesviridae glycoprotein B family. As to quaternary structure, homotrimer; disulfide-linked. Binds to heparan sulfate proteoglycans. Interacts with gH/gL heterodimer. Post-translationally, a proteolytic cleavage by host furin generates two subunits that remain linked by disulfide bonds.

It is found in the virion membrane. The protein localises to the host cell membrane. It localises to the host endosome membrane. Its subcellular location is the host Golgi apparatus membrane. In terms of biological role, envelope glycoprotein that forms spikes at the surface of virion envelope. Essential for the initial attachment to heparan sulfate moieties of the host cell surface proteoglycans. Involved in fusion of viral and cellular membranes leading to virus entry into the host cell. Following initial binding to its host receptors, membrane fusion is mediated by the fusion machinery composed at least of gB and the heterodimer gH/gL. May be involved in the fusion between the virion envelope and the outer nuclear membrane during virion egress. This is Envelope glycoprotein B from Human cytomegalovirus (strain Merlin) (HHV-5).